The chain runs to 1872 residues: MHTVCLLPLLFFTIGGCLGSSRPFRTFVVTDTTLTHLAVHRVTGEVFVGAVNRVFKLASNLTELRAHVTGPIEDNARCYPPPSMRVCSHRLVPVDNVNKLLLIDYAARRLVACGSIWQGICQFLRLDDLFKLGEPHHRKEHYLSGAQEPDSMAGVIVEQGQGPSKLFVGTAVDGKSEYFPTLSSRKLIDDEDSGDMFSLVYQDEFVSSQIKIPSDTLSLYPAFDIYYIYGFVSASFVYFLTLQLDTQQTLLDTAGEKFFTSKIVRMCAGDSEFYSYVEFPIGCSWRGVEYRLVQSAHLAKPGLLLAQALGVPADEDVLFTIFSQGQKNRANPPRQTILCLFTLSSINAHIRRRIQSCYRGEGTLALPWLLNKELPCINTPMQINGNFCGLVLNQPLGGLHVIEGLPLLADSTDGMASVAAYTYHQHSVVFIGTRSGNLKKVRVDGSQDAQLYETVSVVQGTPILRDLLFSPDHRHIYLLSEKQVSQLPVETCEQYLSCAACLGSGDPHCGWCVLQHRCCREGACPGASAPHGFAEELNKCIQVRVRPNNVSVTSSGVQLTVAMRNVPDLSLGVSCSFEEVTESEAILLPSGELRCPSPSLQELQTLTRGHGATHTVRLQLLSMETGVRFAGVDFVFYNCSALQSCMSCVGSPYPCHWCKYRHVCTSHPHECSFQEGRVHSPEGCPEILPRGDLLIPVGVMQPLTLRAKNLPQPQSGQKNYECVVRVQGRQHRVPAVRFNSSSVQCQNASYFYEGDEFGDTELDFSVVWDGDFPIDKPPSFRALLYKCWAQRPSCGLCLKADPRFNCGWCISEHRCQLRVHCPAPKSNWMHPSQKGARCSHPRITQIHPLTGPKEGGTRVTIVGENLGLTSREVGLRVAGVRCNSIPTEYVSAERIVCEMEESLVPSPPPGPAELCVGDCSADFRTQSQQLYSFVTPTLDRVSPTRGPASGGTRLTISGTSLDAGSRVTVIIRDGECQFVRRDAEAIVCISPISTLGPSQAPIILAIDHANISSTGVIYTYTQDPTVTHLEPTWSIINGSTSITVSGTHLLTVQEPRVRAKYRGIETTNTCQVINDTAMLCKAPGIFLGHPQPRAQGEHPDEFGFLLDHVQAARSLNRSSFTYYPDPSFEPLGPSGVLDVKPGSHVVLKGKNLIPAAAGSSRLNYTVLIGGQPCALTVSDTQLLCDSPSQTGRQPVMVLVGGLEFWLGTLHITADRALTLPAMVGLAAGGGLLLLAITVVLVAYKRKTQDADRTLKRLQLQMDNLESRVALECKEAFAELQTDINELTNHMDGVQIPFLDYRTYAVRVLFPGIEAHPVLKELDTPPNVEKALRLFGQLLHSRAFLLTFIHTLEAQSSFSMRDRGTVASLTMVALQSRLDYATGLLKQLLADLIEKNLESKNHPKLLLRRTESVAEKMLTNWFTFLLHKFLKECAGEPLFLLYCAIKQQMEKGPIDAITGEARYSLSEDKLIRQQIDYKTLTLHCVCPESEGSAQVPVKVLNCDSITQAKDKLLDTVYKGIPYSQRPKAEDMDLEWRQGRMARIILQDEDITTKIECDWKRINSLAHYQVTDGSLVALVPKQVSAYNMANSFTFTRSLSRYESLLRAASSPDSLRSRAPMLTPDQEAGTKLWHLVKNHDHADHREGDRGSKMVSEIYLTRLLATKGTLQKFVDDLFETVFSTAHRGSALPLAIKYMFDFLDEQADQRQISDPDVRHTWKSNCLPLRFWVNVIKNPQFVFDIHKNSITDACLSVVAQTFMDSCSTSEHRLGKDSPSNKLLYAKDIPNYKSWVERYYRDIAKMASISDQDMDAYLVEQSRLHANDFNVLSALSELYFYVTKYRQEILTSLDRDASCRKHKLRQKLEQIITLVSSSS.

The N-terminal stretch at 1-19 (MHTVCLLPLLFFTIGGCLG) is a signal peptide. Residues 20–489 (SSRPFRTFVV…SEKQVSQLPV (470 aa)) form the Sema domain. Topologically, residues 20–1220 (SSRPFRTFVV…ITADRALTLP (1201 aa)) are extracellular. A glycan (N-linked (GlcNAc...) asparagine) is linked at N60. Cystine bridges form between C78–C87, C113–C121, C267–C388, C283–C339, C357–C376, C492–C509, C498–C540, C501–C518, and C512–C524. The N-linked (GlcNAc...) asparagine glycan is linked to N549. C575 and C595 form a disulfide bridge. 4 consecutive IPT/TIG domains span residues 841–934 (PRIT…YSFV), 936–1021 (PTLD…YTYT), 1024–1123 (PTVT…FTYY), and 1126–1212 (PSFE…LHIT). N1163 carries an N-linked (GlcNAc...) asparagine glycan. Residues 1221-1241 (AMVGLAAGGGLLLLAITVVLV) form a helical membrane-spanning segment. The stretch at 1240–1294 (LVAYKRKTQDADRTLKRLQLQMDNLESRVALECKEAFAELQTDINELTNHMDGVQ) forms a coiled coil. Topologically, residues 1242 to 1872 (AYKRKTQDAD…QIITLVSSSS (631 aa)) are cytoplasmic. A Phosphoserine modification is found at S1597.

It belongs to the plexin family.

The protein resides in the cell membrane. Its function is as follows. Coreceptor for SEMA3A and SEMA3F. Necessary for signaling by class 3 semaphorins and subsequent remodeling of the cytoskeleton. Plays a role in axon guidance in the developing nervous system. Regulates the migration of sympathetic neurons, but not of neural crest precursors. Required for normal dendrite spine morphology in pyramidal neurons. May play a role in regulating semaphorin-mediated programmed cell death in the developing nervous system. Class 3 semaphorins bind to a complex composed of a neuropilin and a plexin. The plexin modulates the affinity of the complex for specific semaphorins, and its cytoplasmic domain is required for the activation of down-stream signaling events in the cytoplasm. The protein is Plexin-A3 (Plxna3) of Rattus norvegicus (Rat).